Reading from the N-terminus, the 435-residue chain is GTPase Der (435 aa).

EngA-type G domains follow at residues 4–167 and 175–350; these read PVVA…PAEK and ISFS…DNQN. GTP contacts are provided by residues 10–17, 57–61, 119–122, 181–188, 228–232, and 293–296; these read GQPNVGKS, DTGGI, NKAD, GRPNVGKS, DTAGI, and NKWD. A KH-like domain is found at 351 to 435; it reads QRIQSSVLND…PIKILPRKRK (85 aa).

This sequence belongs to the TRAFAC class TrmE-Era-EngA-EngB-Septin-like GTPase superfamily. EngA (Der) GTPase family. As to quaternary structure, associates with the 50S ribosomal subunit.

In terms of biological role, GTPase that plays an essential role in the late steps of ribosome biogenesis. This is GTPase Der from Lactobacillus helveticus (strain DPC 4571).